Here is a 2211-residue protein sequence, read N- to C-terminus: Orsellinic acid synthase (2211 aa).

Positions 44–246 (TFREQVSDAI…TVAVVHSLYH (203 aa)) are N-terminal acylcarrier protein transacylase domain (SAT). In terms of domain architecture, Ketosynthase family 3 (KS3) spans 380–805 (WDDIAIVGMA…GSNAAVIIGE (426 aa)). Catalysis depends on for beta-ketoacyl synthase activity residues cysteine 549, histidine 684, and histidine 724. The malonyl-CoA:ACP transacylase (MAT) domain stretch occupies residues 910-1228 (VFIFSGQGSQ…QLTTLKKNVP (319 aa)). Serine 1006 functions as the For acyl/malonyl transferase activity in the catalytic mechanism. The interval 1309 to 1440 (HAIQKLSHGA…GVVKQSNMAS (132 aa)) is N-terminal hotdog fold. In terms of domain architecture, PKS/mFAS DH spans 1309–1629 (HAIQKLSHGA…FQHVKIPLIE (321 aa)). Residues 1334-1573 (EFIEGHLVCG…GATTLRAPVV (240 aa)) are product template (PT) domain. Histidine 1339 acts as the Proton acceptor; for dehydratase activity in catalysis. Residues 1473-1629 (VQVFSKRAMY…FQHVKIPLIE (157 aa)) are C-terminal hotdog fold. The Proton donor; for dehydratase activity role is filled by aspartate 1537. 2 Carrier domains span residues 1681 to 1755 (AAPE…EALS) and 1787 to 1865 (STVD…VKRP). Residue serine 1715 is modified to O-(pantetheine 4'-phosphoryl)serine. Residues 1755 to 1786 (SPTPVGNDVDNDSPTPGSERGSDSAISTPASV) are disordered. O-(pantetheine 4'-phosphoryl)serine is present on serine 1824. The segment at 1937–2204 (SGKSPLFLIH…AAVSAALVDA (268 aa)) is thioesterase (TE) domain.

It carries out the reaction 3 malonyl-CoA + acetyl-CoA + 2 H(+) = orsellinate + 3 CO2 + 4 CoA. It participates in secondary metabolite biosynthesis. In terms of biological role, non-reducing polyketide synthase; part of the gene cluster that mediates the biosynthesis of the bibenzoquinone oosporein, a metabolite required for fungal virulence that acts by evading host immunity to facilitate fungal multiplication in insects. The non-reducing polyketide synthase OpS1 produces orsellinic acid by condensing acetyl-CoA with 3 malonyl-CoA units. Orsellinic acid is then hydroxylated to benzenetriol by the hydroxylase OpS4. The intermediate is oxidized either nonenzymatically to 5,5'-dideoxy-oosporein or enzymatically to benzenetetrol by the oxidoreductase OpS7. The latter is further dimerized to oosporein by the catalase OpS5. OpS6 probably functions en route for protecting cells against oxidative stress by scavenging any leaked free radical form of benzenetetrol by activating the thiol group of glutathione. In Beauveria bassiana (strain ARSEF 2860) (White muscardine disease fungus), this protein is Orsellinic acid synthase.